A 477-amino-acid polypeptide reads, in one-letter code: GTPase Der (477 aa).

2 EngA-type G domains span residues 3–167 (LTIA…GKER) and 206–382 (LRIA…RMWN). Residues 9 to 16 (GRPNVGKS), 56 to 60 (DTAGL), 119 to 122 (NKSE), 212 to 219 (GRPNTGKS), 259 to 263 (DTAGL), and 324 to 327 (NKWD) each bind GTP. The KH-like domain occupies 383–467 (RRISTAKLNR…PIRISLRASD (85 aa)).

Belongs to the TRAFAC class TrmE-Era-EngA-EngB-Septin-like GTPase superfamily. EngA (Der) GTPase family. As to quaternary structure, associates with the 50S ribosomal subunit.

In terms of biological role, GTPase that plays an essential role in the late steps of ribosome biogenesis. The polypeptide is GTPase Der (Bartonella quintana (strain Toulouse) (Rochalimaea quintana)).